Consider the following 290-residue polypeptide: Syntaxin-1A (290 aa).

The segment at 1–21 (MTKDRLAALQAAQSDDEDMPE) is disordered. The Cytoplasmic segment spans residues 1 to 267 (MTKDRLAALQ…KYQSKARRKK (267 aa)). The region spanning 194–256 (LADIEARHAD…QTATQDTKKA (63 aa)) is the t-SNARE coiled-coil homology domain. A helical; Anchor for type IV membrane protein membrane pass occupies residues 268-289 (IWIAICVLIAIIILVVFLAIYL). A topological domain (vesicular) is located at residue Thr290.

This sequence belongs to the syntaxin family. Post-translationally, (Microbial infection) Targeted and hydrolyzed by the light chain (LC) of P.bifermentans PMP1. Cleavage probably inhibits neurotransmitter release.

The protein resides in the cytoplasmic vesicle. It is found in the secretory vesicle. Its subcellular location is the synaptic vesicle membrane. Plays a critical role in several secretory processes. The protein is Syntaxin-1A of Anopheles gambiae (African malaria mosquito).